We begin with the raw amino-acid sequence, 133 residues long: Small ribosomal subunit protein uS8 (133 aa).

The protein belongs to the universal ribosomal protein uS8 family. As to quaternary structure, part of the 30S ribosomal subunit.

Its function is as follows. One of the primary rRNA binding proteins, it binds directly to 16S rRNA central domain where it helps coordinate assembly of the platform of the 30S subunit. In Ignicoccus hospitalis (strain KIN4/I / DSM 18386 / JCM 14125), this protein is Small ribosomal subunit protein uS8.